Reading from the N-terminus, the 167-residue chain is Insertion element IS1 1 protein InsB (167 aa).

It belongs to the transposase 27 family.

Functionally, absolutely required for transposition of IS1. This is Insertion element IS1 1 protein InsB (insB1) from Escherichia coli (strain K12).